The primary structure comprises 229 residues: Biosynthetic peptidoglycan transglycosylase (229 aa).

The helical transmembrane segment at 14–34 (FITWRFLLVVVLLLLVLLLVL) threads the bilayer.

This sequence belongs to the glycosyltransferase 51 family.

It is found in the cell inner membrane. The enzyme catalyses [GlcNAc-(1-&gt;4)-Mur2Ac(oyl-L-Ala-gamma-D-Glu-L-Lys-D-Ala-D-Ala)](n)-di-trans,octa-cis-undecaprenyl diphosphate + beta-D-GlcNAc-(1-&gt;4)-Mur2Ac(oyl-L-Ala-gamma-D-Glu-L-Lys-D-Ala-D-Ala)-di-trans,octa-cis-undecaprenyl diphosphate = [GlcNAc-(1-&gt;4)-Mur2Ac(oyl-L-Ala-gamma-D-Glu-L-Lys-D-Ala-D-Ala)](n+1)-di-trans,octa-cis-undecaprenyl diphosphate + di-trans,octa-cis-undecaprenyl diphosphate + H(+). Its pathway is cell wall biogenesis; peptidoglycan biosynthesis. Peptidoglycan polymerase that catalyzes glycan chain elongation from lipid-linked precursors. This chain is Biosynthetic peptidoglycan transglycosylase, found in Shewanella denitrificans (strain OS217 / ATCC BAA-1090 / DSM 15013).